The primary structure comprises 382 residues: 4-hydroxybutyrate dehydrogenase (382 aa).

Residues D37, N67, 94–98, 138–142, and K159 contribute to the NAD(+) site; these read GSSID and TTSGT. D193, H197, H261, and H280 together coordinate Fe cation. H280 contacts NAD(+).

Belongs to the iron-containing alcohol dehydrogenase family. It depends on Fe cation as a cofactor.

The catalysed reaction is 4-hydroxybutanoate + NAD(+) = succinate semialdehyde + NADH + H(+). With respect to regulation, shows competitive inhibition of GHBDH activity by the product succinic semialdehyde, and non-competitive inhibitions by the three other substrate-product combinations. The conversion of GHB to SSA is activated by two different saturating purified nudix hydrolases, B.methanolicus activator ACT and E.coli NudF. The nudix hydrolases do not activate the reverse reaction. Its function is as follows. Involved in the degradation of 4-hydroxybutyrate. Catalyzes the interconversion of gamma-hydroxybutyrate (GHB) and succinic semialdehyde (SSA). This Cupriavidus necator (Alcaligenes eutrophus) protein is 4-hydroxybutyrate dehydrogenase.